The following is a 363-amino-acid chain: RNA polymerase II holoenzyme cyclin-like subunit (363 aa).

The 91-residue stretch at 53-143 (YQMLRLAKNL…IGECEFWLIS (91 aa)) folds into the Cyclin N-terminal domain. Residues 252 to 312 (TPGGSGSPAM…SPQKEKSKLQ (61 aa)) are disordered. The span at 265 to 276 (IQQNPPNQAYQL) shows a compositional bias: polar residues. Residues 277–298 (TPQQQEMFRQQQMQQQNRQPET) are compositionally biased toward low complexity. Residues 299–310 (QAKDSPQKEKSK) show a composition bias toward basic and acidic residues.

The protein belongs to the cyclin family. Cyclin C subfamily. As to quaternary structure, component of the SRB8-11 complex, a regulatory module of the Mediator complex.

It is found in the nucleus. In terms of biological role, component of the SRB8-11 complex. The SRB8-11 complex is a regulatory module of the Mediator complex which is itself involved in regulation of basal and activated RNA polymerase II-dependent transcription. The SRB8-11 complex may be involved in the transcriptional repression of a subset of genes regulated by Mediator. It may inhibit the association of the Mediator complex with RNA polymerase II to form the holoenzyme complex. The SRB8-11 complex phosphorylates the C-terminal domain (CTD) of the largest subunit of RNA polymerase II. This Pyricularia oryzae (strain 70-15 / ATCC MYA-4617 / FGSC 8958) (Rice blast fungus) protein is RNA polymerase II holoenzyme cyclin-like subunit (SSN8).